The sequence spans 1469 residues: WASH complex subunit 2 (1469 aa).

Position 136 is a phosphoserine (S136). Disordered regions lie at residues 178–349 and 367–546; these read YDSK…RMPV and KVQS…RVAG. Over residues 197-206 the composition is skewed to basic and acidic residues; the sequence is SDEKEPETKK. Position 227 is a phosphoserine (S227). Composition is skewed to low complexity over residues 276-293 and 306-316; these read SPPS…TSSP and STASLSSSSSS. An LFa 1 motif is present at residues 351-372; it reads LFNEDEFKSFMSEIVDKVQSKT. A compositionally biased stretch (polar residues) spans 370–385; that stretch reads SKTPSSSVSPATTIST. A compositionally biased stretch (basic and acidic residues) spans 387–399; it reads EPPKTKKPVEEYP. 2 positions are modified to phosphoserine: S422 and S426. The span at 519–528 shows a compositional bias: acidic residues; sequence FDDDDLDIDD. Residues 550-563 carry the LFa 5 motif; it reads LFEDDDQDDVTDLF. The disordered stretch occupies residues 571 to 591; that stretch reads IPKETSSGVSPNKNVETPVAS. Positions 574 to 585 are enriched in polar residues; that stretch reads ETSSGVSPNKNV. Residue S580 is modified to Phosphoserine. Position 587 is a phosphothreonine (T587). The short motif at 595-605 is the LFa 6 element; the sequence is LFDDIEDEDLF. Disordered regions lie at residues 607–760, 933–1254, and 1316–1469; these read TPKA…TDLF, ALPN…KLFS, and VTTA…LDFK. Composition is skewed to basic and acidic residues over residues 626–649 and 671–687; these read GEDK…EKQH and TEQK…KDDT. The residue at position 693 (T693) is a Phosphothreonine. Positions 698–709 match the LFa 8 motif; sequence LFSEDLTDDELF. Polar residues-rich tracts occupy residues 709 to 728, 735 to 745, and 938 to 956; these read FSST…TNEF, YTSQTEENVSP, and PSAT…SVSS. Composition is skewed to basic and acidic residues over residues 971–990, 1031–1042, and 1077–1089; these read DNDH…KDEL, ETDRSEVKETPE, and RKQE…RDEP. The segment covering 1091–1109 has biased composition (polar residues); the sequence is ATVQTEAEAPSSGQNTVSS. The span at 1118–1136 shows a compositional bias: basic residues; it reads NKSRARGPAKRRPSTRRGR. Residues 1159–1170 show a composition bias toward basic and acidic residues; the sequence is DSPEVEHSERSS. 7 positions are modified to phosphoserine: S1241, S1245, S1254, S1344, S1380, S1381, and S1408. Composition is skewed to low complexity over residues 1417–1426 and 1434–1452; these read FGGSSTSKAA and AART…PTAT.

The protein belongs to the FAM21 family. As to quaternary structure, component of the WASH complex.

Its function is as follows. Acts at least in part as component of the WASH complex which may regulate wash nucleation-promoting factor (NPF) activity and is required for its membrane targeting during endosomal sorting. This is WASH complex subunit 2 from Drosophila melanogaster (Fruit fly).